A 944-amino-acid chain; its full sequence is Protein translocase subunit SecA (944 aa).

Residues Gln77, 95 to 99 (GEGKT), and Asp484 each bind ATP. Residues 920 to 944 (EQEKQTRKKKKKKPHEDESSKTKIG) are disordered. Over residues 933 to 944 (PHEDESSKTKIG) the composition is skewed to basic and acidic residues.

Belongs to the SecA family. Monomer and homodimer. Part of the essential Sec protein translocation apparatus which comprises SecA, SecYEG and auxiliary proteins SecDF. Other proteins may also be involved.

It is found in the cell membrane. The protein resides in the cytoplasm. The catalysed reaction is ATP + H2O + cellular proteinSide 1 = ADP + phosphate + cellular proteinSide 2.. Functionally, part of the Sec protein translocase complex. Interacts with the SecYEG preprotein conducting channel. Has a central role in coupling the hydrolysis of ATP to the transfer of proteins into and across the cell membrane, serving as an ATP-driven molecular motor driving the stepwise translocation of polypeptide chains across the membrane. This is Protein translocase subunit SecA from Mycoplasma mycoides subsp. mycoides SC (strain CCUG 32753 / NCTC 10114 / PG1).